The following is a 337-amino-acid chain: Serpentine receptor class alpha-17 (337 aa).

The next 6 membrane-spanning stretches (helical) occupy residues 28 to 48 (LNFV…GLAI), 110 to 130 (ELYF…SLTF), 155 to 175 (IIQL…VPLV), 197 to 217 (FRTA…YLSV), 247 to 267 (CILI…VNYI), and 282 to 302 (IAPF…VIYF).

The protein belongs to the nematode receptor-like protein sra family.

It is found in the membrane. The polypeptide is Serpentine receptor class alpha-17 (sra-17) (Caenorhabditis elegans).